Here is a 514-residue protein sequence, read N- to C-terminus: Beta-secretase 2 (514 aa).

An N-terminal signal peptide occupies residues 1 to 19; the sequence is MGALLRALLLLVLAQWLLS. Positions 20-62 are excised as a propeptide; that stretch reads AVPALAPAPFTLPLQVAGATNHRASAVPGLGTPELPRADGLAL. Residues 20-469 are Extracellular-facing; sequence AVPALAPAPF…NEPILWIVSY (450 aa). In terms of domain architecture, Peptidase A1 spans 88 to 425; sequence YYLEMLIGTP…DRAQRRVGFA (338 aa). Asp106 is a catalytic residue. N-linked (GlcNAc...) asparagine glycosylation occurs at Asn166. 3 disulfide bridges follow: Cys229-Cys429, Cys288-Cys453, and Cys340-Cys389. Asp299 is a catalytic residue. Asn362 carries an N-linked (GlcNAc...) asparagine glycan. A helical membrane pass occupies residues 470–490; sequence ALMSVCGAILLVLILLLLLPL. The Cytoplasmic portion of the chain corresponds to 491-514; the sequence is HCRHAPRDPEVVNDESSLVRHRWK.

It belongs to the peptidase A1 family. As to quaternary structure, monomer. Interacts with RTN3 and RTN4. In terms of processing, undergoes autoproteolytic cleavage. Post-translationally, glycosylated. High expression in pancreatic islets. Expressed at much lower levels in the pituitary, colon, and ovaries and is nearly absent from all the other tissues.

The protein localises to the cell membrane. It localises to the golgi apparatus. The protein resides in the endoplasmic reticulum. It is found in the endosome. Its subcellular location is the melanosome. It carries out the reaction Broad endopeptidase specificity. Cleaves Glu-Val-Asn-Leu-|-Asp-Ala-Glu-Phe in the Swedish variant of Alzheimer's amyloid precursor protein.. Its function is as follows. Responsible for the proteolytic processing of the amyloid precursor protein (APP). Cleaves APP, between residues 690 and 691, leading to the generation and extracellular release of beta-cleaved soluble APP, and a corresponding cell-associated C-terminal fragment which is later released by gamma-secretase. It has also been shown that it can cleave APP between residues 671 and 672. Involved in the proteolytic shedding of PMEL at early stages of melanosome biogenesis. Cleaves PMEL within the M-beta fragment to release the amyloidogenic PMEL luminal fragment containing M-alpha and a small portion of M-beta N-terminus. This is a prerequisite step for subsequent processing and assembly of PMEL fibrils into amyloid sheets. Responsible also for the proteolytic processing of CLTRN in pancreatic beta cells. The polypeptide is Beta-secretase 2 (Bace2) (Mus musculus (Mouse)).